Reading from the N-terminus, the 1106-residue chain is Probable ATP-citrate synthase (1106 aa).

Citrate contacts are provided by asparagine 358, threonine 360, and arginine 391. A compositionally biased stretch (polar residues) spans 442–459 (APQTTGQFLLSPERNTGG). A disordered region spans residues 442-478 (APQTTGQFLLSPERNTGGTERAPPSPAANATPTEHPL). Residues 701–721 (VIRYQNDDRVKMIVLLGEVGG) and 752–778 (ITSEVQFGHAGASANALGETAACKNAA) each bind ATP. Glutamate 718 is a binding site for Mg(2+). Catalysis depends on histidine 760, which acts as the Tele-phosphohistidine intermediate. Position 779–789 (779–789 (LRASGALVPES)) interacts with CoA.

This sequence in the N-terminal section; belongs to the succinate/malate CoA ligase beta subunit family. In the C-terminal section; belongs to the succinate/malate CoA ligase alpha subunit family. As to quaternary structure, homotetramer.

The protein localises to the cytoplasm. It carries out the reaction oxaloacetate + acetyl-CoA + ADP + phosphate = citrate + ATP + CoA. In terms of biological role, catalyzes the cleavage of citrate into oxaloacetate and acetyl-CoA, the latter serving as common substrate in multiple biochemical reactions in protein, carbohydrate and lipid metabolism. This chain is Probable ATP-citrate synthase, found in Caenorhabditis elegans.